Consider the following 366-residue polypeptide: Protein-methionine-sulfoxide reductase catalytic subunit MsrP (366 aa).

The segment covering methionine 1–asparagine 22 has biased composition (low complexity). A disordered region spans residues methionine 1 to leucine 40. The segment at residues methionine 1–alanine 76 is a signal peptide (tat-type signal). Positions serine 23–serine 33 are enriched in polar residues. Mo-molybdopterin-binding positions include asparagine 120, tyrosine 123–glutamate 124, cysteine 178, threonine 213, asparagine 265, arginine 270, and serine 281–lysine 283.

It belongs to the MsrP family. In terms of assembly, heterodimer of a catalytic subunit (MsrP) and a heme-binding subunit (MsrQ). The cofactor is Mo-molybdopterin. In terms of processing, predicted to be exported by the Tat system. The position of the signal peptide cleavage has not been experimentally proven.

The protein localises to the periplasm. The enzyme catalyses L-methionyl-[protein] + a quinone + H2O = L-methionyl-(S)-S-oxide-[protein] + a quinol. It catalyses the reaction L-methionyl-[protein] + a quinone + H2O = L-methionyl-(R)-S-oxide-[protein] + a quinol. Part of the MsrPQ system that repairs oxidized periplasmic proteins containing methionine sulfoxide residues (Met-O), using respiratory chain electrons. Thus protects these proteins from oxidative-stress damage caused by reactive species of oxygen and chlorine generated by the host defense mechanisms. MsrPQ is essential for the maintenance of envelope integrity under bleach stress, rescuing a wide series of structurally unrelated periplasmic proteins from methionine oxidation. The catalytic subunit MsrP is non-stereospecific, being able to reduce both (R-) and (S-) diastereoisomers of methionine sulfoxide. The chain is Protein-methionine-sulfoxide reductase catalytic subunit MsrP from Yersinia pestis.